Reading from the N-terminus, the 276-residue chain is Large ribosomal subunit protein uL2 (276 aa).

The disordered stretch occupies residues 223 to 276 (GSAMNPVDHPHGGGEGKAPIGHPGPLTPWGKPTLGYKTRKKNKPSDKFIVKRRK). The span at 265 to 276 (KPSDKFIVKRRK) shows a compositional bias: basic and acidic residues.

It belongs to the universal ribosomal protein uL2 family. Part of the 50S ribosomal subunit. Forms a bridge to the 30S subunit in the 70S ribosome.

Its function is as follows. One of the primary rRNA binding proteins. Required for association of the 30S and 50S subunits to form the 70S ribosome, for tRNA binding and peptide bond formation. It has been suggested to have peptidyltransferase activity; this is somewhat controversial. Makes several contacts with the 16S rRNA in the 70S ribosome. This Caldicellulosiruptor saccharolyticus (strain ATCC 43494 / DSM 8903 / Tp8T 6331) protein is Large ribosomal subunit protein uL2.